A 338-amino-acid polypeptide reads, in one-letter code: DNA-directed RNA polymerase subunit alpha (338 aa).

The tract at residues 1–234 (MIHKNWAELI…DQLSVFVNFD (234 aa)) is alpha N-terminal domain (alpha-NTD). The segment at 250–338 (FDPRLLKKVD…DLAKRFDDQF (89 aa)) is alpha C-terminal domain (alpha-CTD).

Belongs to the RNA polymerase alpha chain family. Homodimer. The RNAP catalytic core consists of 2 alpha, 1 beta, 1 beta' and 1 omega subunit. When a sigma factor is associated with the core the holoenzyme is formed, which can initiate transcription.

It carries out the reaction RNA(n) + a ribonucleoside 5'-triphosphate = RNA(n+1) + diphosphate. DNA-dependent RNA polymerase catalyzes the transcription of DNA into RNA using the four ribonucleoside triphosphates as substrates. This chain is DNA-directed RNA polymerase subunit alpha, found in Paracoccus denitrificans (strain Pd 1222).